A 78-amino-acid chain; its full sequence is Small ribosomal subunit protein uS19m (78 aa).

This sequence belongs to the universal ribosomal protein uS19 family.

The protein localises to the mitochondrion. The sequence is that of Small ribosomal subunit protein uS19m (RPS19) from Acanthamoeba castellanii (Amoeba).